The chain runs to 179 residues: ATP synthase subunit delta (179 aa).

Belongs to the ATPase delta chain family. As to quaternary structure, F-type ATPases have 2 components, F(1) - the catalytic core - and F(0) - the membrane proton channel. F(1) has five subunits: alpha(3), beta(3), gamma(1), delta(1), epsilon(1). F(0) has three main subunits: a(1), b(2) and c(10-14). The alpha and beta chains form an alternating ring which encloses part of the gamma chain. F(1) is attached to F(0) by a central stalk formed by the gamma and epsilon chains, while a peripheral stalk is formed by the delta and b chains.

It localises to the cell inner membrane. In terms of biological role, f(1)F(0) ATP synthase produces ATP from ADP in the presence of a proton or sodium gradient. F-type ATPases consist of two structural domains, F(1) containing the extramembraneous catalytic core and F(0) containing the membrane proton channel, linked together by a central stalk and a peripheral stalk. During catalysis, ATP synthesis in the catalytic domain of F(1) is coupled via a rotary mechanism of the central stalk subunits to proton translocation. Its function is as follows. This protein is part of the stalk that links CF(0) to CF(1). It either transmits conformational changes from CF(0) to CF(1) or is implicated in proton conduction. This chain is ATP synthase subunit delta, found in Burkholderia mallei (strain NCTC 10247).